We begin with the raw amino-acid sequence, 227 residues long: Cytidylate kinase (227 aa).

An ATP-binding site is contributed by 12–20 (GPSGAGKGT).

Belongs to the cytidylate kinase family. Type 1 subfamily.

It localises to the cytoplasm. It catalyses the reaction CMP + ATP = CDP + ADP. The enzyme catalyses dCMP + ATP = dCDP + ADP. This Shigella boydii serotype 18 (strain CDC 3083-94 / BS512) protein is Cytidylate kinase.